We begin with the raw amino-acid sequence, 140 residues long: UPF0654 protein C22G7.11c (140 aa).

2 disordered regions span residues 1–88 (MPDP…DPMK) and 110–140 (YKAT…ETQA). Residues 24–33 (AKERAEDYIE) are compositionally biased toward basic and acidic residues. Polar residues predominate over residues 34-44 (SHSSGQETGDY). Residues 54 to 71 (DYEDLGDYDEDADFDNEE) are compositionally biased toward acidic residues.

Belongs to the UPF0654 (con-6) family.

This is UPF0654 protein C22G7.11c from Schizosaccharomyces pombe (strain 972 / ATCC 24843) (Fission yeast).